The sequence spans 123 residues: Large ribosomal subunit protein bL12 (123 aa).

Belongs to the bacterial ribosomal protein bL12 family. As to quaternary structure, homodimer. Part of the ribosomal stalk of the 50S ribosomal subunit. Forms a multimeric L10(L12)X complex, where L10 forms an elongated spine to which 2 to 4 L12 dimers bind in a sequential fashion. Binds GTP-bound translation factors.

Forms part of the ribosomal stalk which helps the ribosome interact with GTP-bound translation factors. Is thus essential for accurate translation. The polypeptide is Large ribosomal subunit protein bL12 (Neisseria perflava).